A 382-amino-acid chain; its full sequence is Sphingosine 1-phosphate receptor 1 (382 aa).

The residue at position 2 (V2) is an N-acetylvaline. Residues 2–46 (VSTSIPEVKALRSSVSDYGNYDIIVRHYNYTGKLNIGAEKDHGIK) lie on the Extracellular side of the membrane. Residue K10 is modified to N6-acetyllysine. An N-linked (GlcNAc...) asparagine glycan is attached at N30. Residues 47-68 (LTSVVFILICCFIILENIFVLL) traverse the membrane as a helical segment. The Cytoplasmic portion of the chain corresponds to 69-82 (TIWKTKKFHRPMYY). Residues 83–104 (FIGNLALSDLLAGVAYTANLLL) traverse the membrane as a helical segment. Residues 105–116 (SGATTYKLTPAQ) lie on the Extracellular side of the membrane. A helical membrane pass occupies residues 117–138 (WFLREGSMFVALSASVFSLLAI). Residue 120–121 (RE) coordinates sphing-4-enine 1-phosphate. The Cytoplasmic segment spans residues 139–160 (AIERYITMLKMKLHNGSNSSRS). A helical membrane pass occupies residues 161 to 182 (FLLISACWVISLILGGLPIMGW). The Extracellular portion of the chain corresponds to 183–196 (NCISSLSSCSTVLP). A disulfide bridge connects residues C184 and C191. Residues 197–224 (LYHKHYILFCTTVFTLLLLSIVILYCRI) traverse the membrane as a helical segment. Residues 225–257 (YSLVRTRSRRLTFRKNISKASRSSEKSLALLKT) lie on the Cytoplasmic side of the membrane. A Phosphothreonine modification is found at T236. A helical transmembrane segment spans residues 258–278 (VIIVLSVFIACWAPLFILLLL). 265–269 (FIACW) is a binding site for sphing-4-enine 1-phosphate. The Extracellular portion of the chain corresponds to 279 to 289 (DVGCKAKTCDI). C282 and C287 are disulfide-bonded. The chain crosses the membrane as a helical span at residues 290 to 310 (LYKAEYFLVLAVLNSGTNPII). The Cytoplasmic portion of the chain corresponds to 311-382 (YTLTNKEMRR…MSSGNVNSSS (72 aa)). C328 carries S-palmitoyl cysteine lipidation. The segment at 348-382 (MEFSRSKSDNSSHPQKDDGDNPETIMSSGNVNSSS) is disordered. S351 and S353 each carry phosphoserine. Residues 351–366 (SRSKSDNSSHPQKDDG) show a composition bias toward basic and acidic residues. A compositionally biased stretch (polar residues) spans 371 to 382 (TIMSSGNVNSSS).

It belongs to the G-protein coupled receptor 1 family. As to quaternary structure, interacts with GNAI1 and GNAI3. Interacts with CD69; this interaction promotes S1PR1 degradation. In terms of processing, palmitoylated by ZDHHC5. Palmitoylation is required for targeting to plasma membrane, enabling G(i) coupling. In terms of tissue distribution, expressed in a wide variety of tissues with highest levels in brain, heart and spleen. Lower levels found in kidney, liver, lung, muscle, placenta, thymus, and uterus. Very low levels in intestine, stomach and testis. According to PubMed:9931453, expressed modestly in apparent endothelial cells surrounding some blood vessels (e.g. aortic trunk).

Its subcellular location is the cell membrane. The protein resides in the endosome. The protein localises to the membrane raft. Its function is as follows. G-protein coupled receptor for the bioactive lysosphingolipid sphingosine 1-phosphate (S1P) that seems to be coupled to the G(i) subclass of heteromeric G proteins. Signaling leads to the activation of RAC1, SRC, PTK2/FAK1 and MAP kinases. Plays an important role in cell migration, probably via its role in the reorganization of the actin cytoskeleton and the formation of lamellipodia in response to stimuli that increase the activity of the sphingosine kinase SPHK1. Required for normal chemotaxis toward sphingosine 1-phosphate. Required for normal embryonic heart development and normal cardiac morphogenesis. Plays an important role in the regulation of sprouting angiogenesis and vascular maturation. Inhibits sprouting angiogenesis to prevent excessive sprouting during blood vessel development. Required for normal egress of mature T-cells from the thymus into the blood stream and into peripheral lymphoid organs. Plays a role in the migration of osteoclast precursor cells, the regulation of bone mineralization and bone homeostasis. Plays a role in responses to oxidized 1-palmitoyl-2-arachidonoyl-sn-glycero-3-phosphocholine by pulmonary endothelial cells and in the protection against ventilator-induced lung injury. The chain is Sphingosine 1-phosphate receptor 1 from Mus musculus (Mouse).